A 296-amino-acid polypeptide reads, in one-letter code: Glycine N-acyltransferase (296 aa).

N6-acetyllysine; alternate occurs at positions 16, 127, and 141. 3 positions are modified to N6-succinyllysine; alternate: Lys16, Lys127, and Lys141. Residue Lys159 is modified to N6-acetyllysine. Lys169 carries the post-translational modification N6-succinyllysine. Residues Lys183 and Lys256 each carry the N6-acetyllysine; alternate modification. N6-succinyllysine; alternate occurs at positions 183 and 256.

This sequence belongs to the glycine N-acyltransferase family. In terms of tissue distribution, predominantly expressed in liver (at protein level) and kidney. Down-regulated in hepatocellular carcinoma and other liver cancers.

It is found in the mitochondrion. The catalysed reaction is an acyl-CoA + glycine = an N-acylglycine + CoA + H(+). It carries out the reaction benzoyl-CoA + glycine = N-benzoylglycine + CoA + H(+). In terms of biological role, mitochondrial acyltransferase which transfers an acyl group to the N-terminus of glycine and glutamine, although much less efficiently. Can conjugate numerous substrates to form a variety of N-acylglycines, with a preference for benzoyl-CoA over phenylacetyl-CoA as acyl donors. Thereby detoxify xenobiotics, such as benzoic acid or salicylic acid, and endogenous organic acids, such as isovaleric acid. The polypeptide is Glycine N-acyltransferase (GLYAT) (Homo sapiens (Human)).